A 435-amino-acid polypeptide reads, in one-letter code: Tryptophan--tRNA ligase (435 aa).

ATP contacts are provided by residues 10–12 (TTS) and 18–19 (GN). A 'HIGH' region motif is present at residues 11 to 19 (TSGTPHLGN). D143 is a binding site for L-tryptophan. ATP is bound by residues 155 to 157 (GRD), L195, and 202 to 206 (KMSKS). The short motif at 202–206 (KMSKS) is the 'KMSKS' region element.

Belongs to the class-I aminoacyl-tRNA synthetase family. Homodimer.

The protein resides in the cytoplasm. The enzyme catalyses tRNA(Trp) + L-tryptophan + ATP = L-tryptophyl-tRNA(Trp) + AMP + diphosphate + H(+). Catalyzes the attachment of tryptophan to tRNA(Trp). This Xylella fastidiosa (strain Temecula1 / ATCC 700964) protein is Tryptophan--tRNA ligase.